A 309-amino-acid polypeptide reads, in one-letter code: Vacuolar membrane protein YOR292C (309 aa).

Residues 1–52 (MPLQLFGRDQIVVHYDNGNMSNDDQNHQSVLGSWTRRAAAALRTLMNKRIQR) lie on the Vacuolar side of the membrane. N-linked (GlcNAc...) asparagine glycosylation is present at Asn-19. The helical transmembrane segment at 53 to 73 (ITLTHWLLLVIWVTSLWKFTS) threads the bilayer. Over 74–81 (HYRQLYAN) the chain is Cytoplasmic. The helical transmembrane segment at 82 to 102 (SAVFATLCTNILLFGISDILA) threads the bilayer. Residues 103–183 (QSIACFYSYH…KTDTFDFFRW (81 aa)) lie on the Vacuolar side of the membrane. Asn-121 is a glycosylation site (N-linked (GlcNAc...) asparagine). The chain crosses the membrane as a helical span at residues 184–204 (GCFMFWGFFISFFQAPWYKFL). The Cytoplasmic segment spans residues 205-225 (NFFYTEDPTVVQVFERVLSDQ). Residues 226–246 (LLYSPISLYCFFMFSNYVMEG) form a helical membrane-spanning segment. Residues 247–260 (GDKDTLGKKIQRLY) lie on the Vacuolar side of the membrane. Residues 261–281 (ISTLGCNYLVWPMVQFINFLI) form a helical membrane-spanning segment. Residues 282–309 (MPRDFQAPFSSSVGVVWNCFLSMRNASK) are Cytoplasmic-facing.

Belongs to the peroxisomal membrane protein PXMP2/4 family. In terms of processing, N-glycosylated.

It is found in the vacuole membrane. This is Vacuolar membrane protein YOR292C from Saccharomyces cerevisiae (strain ATCC 204508 / S288c) (Baker's yeast).